The primary structure comprises 551 residues: Terpene synthase 10 (551 aa).

Positions 303, 307, and 455 each coordinate Mg(2+). Residues 303–307 (DDIYD) carry the DDXXD motif motif.

The protein belongs to the terpene synthase family. Mg(2+) serves as cofactor.

Functionally, catalyzes the cyclization of farnesyl diphosphate to sesquiterpene olefins. The chain is Terpene synthase 10 (TPS10) from Ricinus communis (Castor bean).